A 96-amino-acid chain; its full sequence is Small ribosomal subunit protein bS6 (96 aa).

This sequence belongs to the bacterial ribosomal protein bS6 family.

Functionally, binds together with bS18 to 16S ribosomal RNA. In Beutenbergia cavernae (strain ATCC BAA-8 / DSM 12333 / CCUG 43141 / JCM 11478 / NBRC 16432 / NCIMB 13614 / HKI 0122), this protein is Small ribosomal subunit protein bS6.